Reading from the N-terminus, the 316-residue chain is 4-hydroxy-3-methylbut-2-enyl diphosphate reductase (316 aa).

A [4Fe-4S] cluster-binding site is contributed by cysteine 12. Residues histidine 41 and histidine 74 each contribute to the (2E)-4-hydroxy-3-methylbut-2-enyl diphosphate site. Residues histidine 41 and histidine 74 each coordinate dimethylallyl diphosphate. Residues histidine 41 and histidine 74 each coordinate isopentenyl diphosphate. Cysteine 96 is a [4Fe-4S] cluster binding site. Histidine 124 provides a ligand contact to (2E)-4-hydroxy-3-methylbut-2-enyl diphosphate. Histidine 124 contributes to the dimethylallyl diphosphate binding site. Histidine 124 is an isopentenyl diphosphate binding site. Glutamate 126 serves as the catalytic Proton donor. Threonine 167 provides a ligand contact to (2E)-4-hydroxy-3-methylbut-2-enyl diphosphate. Residue cysteine 197 coordinates [4Fe-4S] cluster. 4 residues coordinate (2E)-4-hydroxy-3-methylbut-2-enyl diphosphate: serine 225, serine 226, asparagine 227, and serine 269. Residues serine 225, serine 226, asparagine 227, and serine 269 each coordinate dimethylallyl diphosphate. Isopentenyl diphosphate contacts are provided by serine 225, serine 226, asparagine 227, and serine 269.

This sequence belongs to the IspH family. In terms of assembly, homodimer. Requires [4Fe-4S] cluster as cofactor.

The catalysed reaction is isopentenyl diphosphate + 2 oxidized [2Fe-2S]-[ferredoxin] + H2O = (2E)-4-hydroxy-3-methylbut-2-enyl diphosphate + 2 reduced [2Fe-2S]-[ferredoxin] + 2 H(+). It catalyses the reaction dimethylallyl diphosphate + 2 oxidized [2Fe-2S]-[ferredoxin] + H2O = (2E)-4-hydroxy-3-methylbut-2-enyl diphosphate + 2 reduced [2Fe-2S]-[ferredoxin] + 2 H(+). It participates in isoprenoid biosynthesis; dimethylallyl diphosphate biosynthesis; dimethylallyl diphosphate from (2E)-4-hydroxy-3-methylbutenyl diphosphate: step 1/1. It functions in the pathway isoprenoid biosynthesis; isopentenyl diphosphate biosynthesis via DXP pathway; isopentenyl diphosphate from 1-deoxy-D-xylulose 5-phosphate: step 6/6. In terms of biological role, catalyzes the conversion of 1-hydroxy-2-methyl-2-(E)-butenyl 4-diphosphate (HMBPP) into a mixture of isopentenyl diphosphate (IPP) and dimethylallyl diphosphate (DMAPP). Acts in the terminal step of the DOXP/MEP pathway for isoprenoid precursor biosynthesis. This is 4-hydroxy-3-methylbut-2-enyl diphosphate reductase from Escherichia coli (strain UTI89 / UPEC).